Consider the following 224-residue polypeptide: Ribose-5-phosphate isomerase A (224 aa).

Substrate-binding positions include 32-35, 85-88, and 98-101; these read TGST, DGAD, and KGGG. Glutamate 107 serves as the catalytic Proton acceptor. Position 125 (lysine 125) interacts with substrate.

Belongs to the ribose 5-phosphate isomerase family. Homodimer.

The enzyme catalyses aldehydo-D-ribose 5-phosphate = D-ribulose 5-phosphate. It participates in carbohydrate degradation; pentose phosphate pathway; D-ribose 5-phosphate from D-ribulose 5-phosphate (non-oxidative stage): step 1/1. In terms of biological role, catalyzes the reversible conversion of ribose-5-phosphate to ribulose 5-phosphate. This chain is Ribose-5-phosphate isomerase A, found in Pseudomonas fluorescens (strain Pf0-1).